Here is a 362-residue protein sequence, read N- to C-terminus: Homoisocitrate dehydrogenase (362 aa).

79–81 (VQS) serves as a coordination point for NADH. Serine 81 is a binding site for (2R,3S)-homoisocitrate. Serine 81 and serine 91 each carry phosphoserine. The (2R,3S)-homoisocitrate site is built by arginine 97, arginine 107, arginine 126, tyrosine 133, lysine 196, and asparagine 198. Asparagine 198 serves as a coordination point for NADH. Mg(2+)-binding residues include aspartate 232, aspartate 256, and aspartate 260. Residues 289-293 (GSAPD) and asparagine 301 contribute to the NADH site.

Belongs to the isocitrate and isopropylmalate dehydrogenases family. Requires Mg(2+) as cofactor.

The protein resides in the cytoplasm. It catalyses the reaction (2R,3S)-homoisocitrate + NAD(+) = 2-oxoadipate + CO2 + NADH. The protein operates within amino-acid biosynthesis; L-lysine biosynthesis via AAA pathway; L-alpha-aminoadipate from 2-oxoglutarate: step 4/5. This is Homoisocitrate dehydrogenase (lys12) from Schizosaccharomyces pombe (strain 972 / ATCC 24843) (Fission yeast).